Reading from the N-terminus, the 529-residue chain is Bifunctional purine biosynthesis protein PurH (529 aa).

In terms of domain architecture, MGS-like spans 1-148; that stretch reads MQQRRPVRRA…KNHKDVAIVV (148 aa).

Belongs to the PurH family.

The enzyme catalyses (6R)-10-formyltetrahydrofolate + 5-amino-1-(5-phospho-beta-D-ribosyl)imidazole-4-carboxamide = 5-formamido-1-(5-phospho-D-ribosyl)imidazole-4-carboxamide + (6S)-5,6,7,8-tetrahydrofolate. It carries out the reaction IMP + H2O = 5-formamido-1-(5-phospho-D-ribosyl)imidazole-4-carboxamide. It participates in purine metabolism; IMP biosynthesis via de novo pathway; 5-formamido-1-(5-phospho-D-ribosyl)imidazole-4-carboxamide from 5-amino-1-(5-phospho-D-ribosyl)imidazole-4-carboxamide (10-formyl THF route): step 1/1. It functions in the pathway purine metabolism; IMP biosynthesis via de novo pathway; IMP from 5-formamido-1-(5-phospho-D-ribosyl)imidazole-4-carboxamide: step 1/1. In Klebsiella pneumoniae (strain 342), this protein is Bifunctional purine biosynthesis protein PurH.